The chain runs to 260 residues: MVLIRVLANLLVLHLSYAQKSSELVIGGDECNINEHPFLALMYNSTSMKFHCSGTLLNEEWVLTAAHCDMENMQIYLGVHDKKNPNKDQQTRVPKEMFFCLSNKSYTPWDKDIMLIRLNSPVTYSTHIAPFSLPSSPPTVGSVCRIMGWGAITSPNETYPDVPHCANIEIYDYSVCRKAYGGLPEKSRTLCAGVLQGGIDTCLADSGGPLICNGQFQGIVAWGRHPCAQPQLPAFYTKVFDYSDWIQSIIAGNTAATCPS.

A signal peptide spans 1–18 (MVLIRVLANLLVLHLSYA). A propeptide spanning residues 19–24 (QKSSEL) is cleaved from the precursor. The region spanning 25–251 (VIGGDECNIN…YSDWIQSIIA (227 aa)) is the Peptidase S1 domain. 6 disulfides stabilise this stretch: cysteine 31–cysteine 165, cysteine 52–cysteine 68, cysteine 100–cysteine 258, cysteine 144–cysteine 212, cysteine 176–cysteine 191, and cysteine 202–cysteine 227. Residue asparagine 44 is glycosylated (N-linked (GlcNAc...) asparagine). The active-site Charge relay system is the histidine 67. Residue asparagine 103 is glycosylated (N-linked (GlcNAc...) asparagine). Aspartate 112 functions as the Charge relay system in the catalytic mechanism. A glycan (N-linked (GlcNAc...) asparagine) is linked at asparagine 156. The active-site Charge relay system is serine 206.

It belongs to the peptidase S1 family. Snake venom subfamily. As to expression, expressed by the venom gland.

The protein resides in the secreted. Snake venom serine protease that may act in the hemostasis system of the prey. The chain is Serine protease VLSP-1 from Macrovipera lebetinus (Levantine viper).